Consider the following 190-residue polypeptide: Small ribosomal subunit protein eS7A (190 aa).

Serine 2 carries the N-acetylserine modification. Residues lysine 83, lysine 84, and lysine 124 each participate in a glycyl lysine isopeptide (Lys-Gly) (interchain with G-Cter in ubiquitin) cross-link.

It belongs to the eukaryotic ribosomal protein eS7 family. In terms of assembly, component of the small ribosomal subunit (SSU). Mature yeast ribosomes consist of a small (40S) and a large (60S) subunit. The 40S small subunit contains 1 molecule of ribosomal RNA (18S rRNA) and 33 different proteins (encoded by 57 genes). The large 60S subunit contains 3 rRNA molecules (25S, 5.8S and 5S rRNA) and 46 different proteins (encoded by 81 genes). Interacts with snoRNA U3. uS11 interacts with MPP10. Component of the ribosomal small subunit (SSU) processome composed of at least 40 protein subunits and snoRNA U3. Post-translationally, N-terminally acetylated by acetyltransferase NatA. In terms of processing, ubiquitinated at Lys-83 and Lys-84 in response to stalled ribosomes, leading to activation of the No-Go Decay (NGD) pathway: first monoubiquitinated by MOT2/NOT4, followed by formation by HEL2 of 'Lys-63'-linked polyubiquitin chains on monoubiquitin.

It is found in the cytoplasm. The protein localises to the nucleus. The protein resides in the nucleolus. Its function is as follows. Component of the ribosome, a large ribonucleoprotein complex responsible for the synthesis of proteins in the cell. The small ribosomal subunit (SSU) binds messenger RNAs (mRNAs) and translates the encoded message by selecting cognate aminoacyl-transfer RNA (tRNA) molecules. The large subunit (LSU) contains the ribosomal catalytic site termed the peptidyl transferase center (PTC), which catalyzes the formation of peptide bonds, thereby polymerizing the amino acids delivered by tRNAs into a polypeptide chain. The nascent polypeptides leave the ribosome through a tunnel in the LSU and interact with protein factors that function in enzymatic processing, targeting, and the membrane insertion of nascent chains at the exit of the ribosomal tunnel. eS7 is involved in nucleolar processing of pre-18S ribosomal RNA and ribosome assembly. This chain is Small ribosomal subunit protein eS7A, found in Saccharomyces cerevisiae (strain ATCC 204508 / S288c) (Baker's yeast).